Consider the following 316-residue polypeptide: Olfactory receptor 4N4C (316 aa).

Topologically, residues 1 to 26 are cytoplasmic; that stretch reads MKIANNTVVTEFILLGLTQSQDIQLL. Residues 27–47 traverse the membrane as a helical segment; that stretch reads VFVLILIFYLIILPGNFLIIF. At 48–56 the chain is on the extracellular side; that stretch reads TIRSDPGLT. Residues 57–77 form a helical membrane-spanning segment; it reads APLYLFLGNLAFLDASYSFIV. Topologically, residues 78–99 are cytoplasmic; the sequence is APRMLVDFLSEKKVISYRGCIT. Residues cysteine 97 and cysteine 179 are joined by a disulfide bond. The chain crosses the membrane as a helical span at residues 100-120; sequence QLFFLHFLGGGEGLLLVVMAF. The Extracellular portion of the chain corresponds to 121–143; that stretch reads DRYIAICRPLHCSTVMNPRACYA. The chain crosses the membrane as a helical span at residues 144–164; the sequence is MMLALWLGGFVHSIIQVVLIL. The Cytoplasmic segment spans residues 165-204; that stretch reads RLPFCGPNQLDNFFCDVRQVIKLACTDMFVVELLMVFNSG. Residues 205-225 form a helical membrane-spanning segment; sequence LMTLLCFLGLLASYAVILCHV. At 226-243 the chain is on the extracellular side; it reads RRAASEGKNKAMSTCTTR. The helical transmembrane segment at 244-264 threads the bilayer; the sequence is VIIILLMFGPAIFIYICPFRA. The Cytoplasmic portion of the chain corresponds to 265–268; the sequence is LPAD. The helical transmembrane segment at 269 to 289 threads the bilayer; that stretch reads KMVSLFHTVIFPLMNPMIYTL. The Extracellular segment spans residues 290-316; sequence RNQEVKTSMKRLLSRHVVCQVDFIIRN.

This sequence belongs to the G-protein coupled receptor 1 family.

It localises to the membrane. In terms of biological role, odorant receptor. This chain is Olfactory receptor 4N4C, found in Homo sapiens (Human).